We begin with the raw amino-acid sequence, 231 residues long: Large ribosomal subunit protein uL1 (231 aa).

The protein belongs to the universal ribosomal protein uL1 family. Part of the 50S ribosomal subunit.

Functionally, binds directly to 23S rRNA. The L1 stalk is quite mobile in the ribosome, and is involved in E site tRNA release. In terms of biological role, protein L1 is also a translational repressor protein, it controls the translation of the L11 operon by binding to its mRNA. The protein is Large ribosomal subunit protein uL1 of Azoarcus sp. (strain BH72).